The following is a 115-amino-acid chain: DNA-binding protein PH1060 (115 aa).

Belongs to the PDCD5 family.

The sequence is that of DNA-binding protein PH1060 from Pyrococcus horikoshii (strain ATCC 700860 / DSM 12428 / JCM 9974 / NBRC 100139 / OT-3).